The sequence spans 254 residues: uncharacterized protein (254 aa).

This is an uncharacterized protein from Acidianus filamentous virus 2 (isolate Italy/Pozzuoli) (AFV-2).